We begin with the raw amino-acid sequence, 945 residues long: MSNKKADSKPQARYPVNLLDTPFPMRGDLPRREPQWVKDWQERKIYEKIRAASKGRKKFILHDGPPYANGDIHLGHAVNKILKDMIVKARNLAGFDAVYVPGWDCHGMPIEIQIEKQFGKSLPAAEVMQKARAYATEQIEKQKAGFRRLGVLGDWDNPYKTMNFANEAGEIRALAKIMEKGYVFRGLKPVNWCFDCGSALAEAEVEYKDKTDPTIDVMFTFADPEKTAHAFGLAALPRNEGGIVIWTTTPWTIPANQALNLHPEIVYALVDTPRGLLILAEERVEACLKSYGIAGTVIATAPGAKLANLRFNHPLASAHPSYKRTSPVYLGDYVTTETGTGIVHSSPAYGVEDFISCKTHGMADSDILSPVMGDGRYIESLALFGGLSIWDANPKIVEALDEAGTLLRTEKYLHSYMHCWRHKTPIIYRATSQWFAGMDIKPNDSDKTLRETALEGIEATAFYPSWGKQRLFAMIANRPDWTLSRQRQWGVPMAFFVHKETGELHPRTLELLEEVAKRVEVSGIEAWQTLDPRELIGDDANMYEKNRDTLDVWFDSGTTHWHVLRGSHKDELQFPADLYLEGSDQHRGWFHSSLLTASMLDGRPPYNALLTHGFTVDGEGRKMSKSLGNGIDPHEVSNRLGAEIIRLWIASTDYSGELAISEEILKRVTESYRRIRNTLRFLLANLSDFDIGKHARPVGEWLEIDRYAVALTANLQADILSHYDRYEFHPVVAKLQTFCSEDLGGFYLDVLKDRLYTTAADSKARRSAQTALYHIAHGLLRLMAPFLSFTAEEAWKVFQPQSETIYTETYHAYPDVPEASTLLDKWTLLRAVRSDVTKALEEARVANQIGSSLQAEVEIRAAGARHDALASLGADLKFVLITSGATVVKVDSVDEEGVDVITSKYLKCERCWHYRKDVGESAEHPTLCGRCISNLFGNGETRSAA.

The 'HIGH' region motif lies at 66 to 76 (PYANGDIHLGH). Glutamate 581 provides a ligand contact to L-isoleucyl-5'-AMP. Residues 622-626 (KMSKS) carry the 'KMSKS' region motif. Lysine 625 is an ATP binding site. Residues cysteine 908, cysteine 911, cysteine 928, and cysteine 931 each coordinate Zn(2+).

Belongs to the class-I aminoacyl-tRNA synthetase family. IleS type 1 subfamily. Monomer. It depends on Zn(2+) as a cofactor.

The protein localises to the cytoplasm. The catalysed reaction is tRNA(Ile) + L-isoleucine + ATP = L-isoleucyl-tRNA(Ile) + AMP + diphosphate. In terms of biological role, catalyzes the attachment of isoleucine to tRNA(Ile). As IleRS can inadvertently accommodate and process structurally similar amino acids such as valine, to avoid such errors it has two additional distinct tRNA(Ile)-dependent editing activities. One activity is designated as 'pretransfer' editing and involves the hydrolysis of activated Val-AMP. The other activity is designated 'posttransfer' editing and involves deacylation of mischarged Val-tRNA(Ile). The chain is Isoleucine--tRNA ligase from Paraburkholderia phymatum (strain DSM 17167 / CIP 108236 / LMG 21445 / STM815) (Burkholderia phymatum).